Consider the following 237-residue polypeptide: Endonuclease V (237 aa).

Mg(2+) is bound by residues D46 and D114.

This sequence belongs to the endonuclease V family. It depends on Mg(2+) as a cofactor.

The protein localises to the cytoplasm. It carries out the reaction Endonucleolytic cleavage at apurinic or apyrimidinic sites to products with a 5'-phosphate.. Functionally, DNA repair enzyme involved in the repair of deaminated bases. Selectively cleaves double-stranded DNA at the second phosphodiester bond 3' to a deoxyinosine leaving behind the intact lesion on the nicked DNA. The sequence is that of Endonuclease V from Xanthomonas axonopodis pv. citri (strain 306).